Consider the following 290-residue polypeptide: 6-carboxyhexanoate--CoA ligase (290 aa).

The protein belongs to the BioW family. In terms of assembly, homodimer. Mg(2+) serves as cofactor.

The catalysed reaction is heptanedioate + ATP + CoA = 6-carboxyhexanoyl-CoA + AMP + diphosphate. Its pathway is metabolic intermediate metabolism; pimeloyl-CoA biosynthesis; pimeloyl-CoA from pimelate: step 1/1. Catalyzes the transformation of pimelate into pimeloyl-CoA with concomitant hydrolysis of ATP to AMP. The sequence is that of 6-carboxyhexanoate--CoA ligase from Bacillus amyloliquefaciens (Bacillus velezensis).